A 176-amino-acid chain; its full sequence is PKHD-type hydroxylase Mfla_0096 (176 aa).

The Fe2OG dioxygenase domain occupies lysine 78–alanine 147.

Requires Fe(2+) as cofactor. The cofactor is L-ascorbate.

This is PKHD-type hydroxylase Mfla_0096 from Methylobacillus flagellatus (strain ATCC 51484 / DSM 6875 / VKM B-1610 / KT).